We begin with the raw amino-acid sequence, 288 residues long: Ankyrin repeat and SOCS box protein 8 (288 aa).

Phosphoserine is present on S17. ANK repeat units lie at residues 52–81 (GTLK…EVNA), 85–113 (YNRT…NPNA), 117–146 (NRDT…SVNA), and 150–179 (NNDT…EVRV). One can recognise an SOCS box domain in the interval 235-288 (QLCEKLTVLCSAPGTLKTLSRYAVRRSLGLQYLPDAVKGLPLPASLKEYLLLIE).

This sequence belongs to the ankyrin SOCS box (ASB) family. Interacts with TBK1; this interaction promotes TBK1 proteasomal degradation. Post-translationally, phosphorylated by TBK1.

The protein localises to the cytoplasm. The protein operates within protein modification; protein ubiquitination. In terms of biological role, may be a substrate-recognition component of a SCF-like ECS (Elongin-Cullin-SOCS-box protein) E3 ubiquitin-protein ligase complex which mediates the ubiquitination and subsequent proteasomal degradation of target proteins. Inhibits IFN-beta production through the IRF3 signaling pathway by targeting TBK1 via 'Lys-48'-linked ubiquitination, leading to its proteasomal degradation. This is Ankyrin repeat and SOCS box protein 8 (ASB8) from Bos taurus (Bovine).